Reading from the N-terminus, the 369-residue chain is Anhydro-N-acetylmuramic acid kinase (369 aa).

Position 12 to 19 (12 to 19) interacts with ATP; sequence GTSLDGVD.

Belongs to the anhydro-N-acetylmuramic acid kinase family.

It catalyses the reaction 1,6-anhydro-N-acetyl-beta-muramate + ATP + H2O = N-acetyl-D-muramate 6-phosphate + ADP + H(+). The protein operates within amino-sugar metabolism; 1,6-anhydro-N-acetylmuramate degradation. It functions in the pathway cell wall biogenesis; peptidoglycan recycling. Functionally, catalyzes the specific phosphorylation of 1,6-anhydro-N-acetylmuramic acid (anhMurNAc) with the simultaneous cleavage of the 1,6-anhydro ring, generating MurNAc-6-P. Is required for the utilization of anhMurNAc either imported from the medium or derived from its own cell wall murein, and thus plays a role in cell wall recycling. In Shigella flexneri, this protein is Anhydro-N-acetylmuramic acid kinase.